Consider the following 313-residue polypeptide: GTP cyclohydrolase MptA (313 aa).

The protein belongs to the GTP cyclohydrolase IV family. As to quaternary structure, homodimer. Requires Fe(2+) as cofactor.

The enzyme catalyses GTP + H2O = 7,8-dihydroneopterin 2',3'-cyclic phosphate + formate + diphosphate + H(+). It participates in cofactor biosynthesis; 5,6,7,8-tetrahydromethanopterin biosynthesis. Converts GTP to 7,8-dihydro-D-neopterin 2',3'-cyclic phosphate, the first intermediate in the biosynthesis of coenzyme methanopterin. The sequence is that of GTP cyclohydrolase MptA from Methanosphaera stadtmanae (strain ATCC 43021 / DSM 3091 / JCM 11832 / MCB-3).